A 235-amino-acid chain; its full sequence is Ubiquinone biosynthesis O-methyltransferase (235 aa).

S-adenosyl-L-methionine-binding residues include R39, G59, D80, and M124.

Belongs to the methyltransferase superfamily. UbiG/COQ3 family.

The enzyme catalyses a 3-demethylubiquinol + S-adenosyl-L-methionine = a ubiquinol + S-adenosyl-L-homocysteine + H(+). It carries out the reaction a 3-(all-trans-polyprenyl)benzene-1,2-diol + S-adenosyl-L-methionine = a 2-methoxy-6-(all-trans-polyprenyl)phenol + S-adenosyl-L-homocysteine + H(+). The protein operates within cofactor biosynthesis; ubiquinone biosynthesis. Its function is as follows. O-methyltransferase that catalyzes the 2 O-methylation steps in the ubiquinone biosynthetic pathway. The sequence is that of Ubiquinone biosynthesis O-methyltransferase from Vibrio vulnificus (strain CMCP6).